We begin with the raw amino-acid sequence, 435 residues long: Putrescine transporter PotE (435 aa).

Helical transmembrane passes span 8 to 28 (IGVV…GIIM), 39 to 59 (ISIV…YAFA), 95 to 115 (LVIA…ELFG), 117 to 137 (ILSP…ATVL), 148 to 168 (ISSF…IIGW), 185 to 205 (VPTF…FLGL), 224 to 244 (IAVL…TNVI), 275 to 295 (VIMG…QFTI), 320 to 340 (APVV…LMTI), 354 to 374 (LAVV…AVLL), 386 to 406 (TTVF…YAAG), and 409 to 429 (AMLY…FVSY).

Belongs to the amino acid-polyamine-organocation (APC) superfamily. Basic amino acid/polyamine antiporter (APA) (TC 2.A.3.2) family.

The protein localises to the cell inner membrane. It carries out the reaction putrescine(in) + H(+)(in) = putrescine(out) + H(+)(out). The enzyme catalyses putrescine(in) + L-ornithine(out) = putrescine(out) + L-ornithine(in). Catalyzes both the uptake and excretion of putrescine. The uptake of putrescine is dependent on the membrane potential and the excretion involves putrescine-ornithine antiporter activity. This Haemophilus influenzae (strain ATCC 51907 / DSM 11121 / KW20 / Rd) protein is Putrescine transporter PotE.